The chain runs to 315 residues: Putative steroid dehydrogenase 2 (315 aa).

NADP(+) is bound at residue 47 to 76 (ASWAVVTGATDGIGKSYSFELARRGFNVYI). Residue Tyr-202 is part of the active site.

This sequence belongs to the short-chain dehydrogenases/reductases (SDR) family. 17-beta-HSD 3 subfamily.

This Caenorhabditis elegans protein is Putative steroid dehydrogenase 2 (stdh-2).